The primary structure comprises 350 residues: Cytosolic sulfotransferase 18 (350 aa).

The residue at position 1 (Met-1) is an N-acetylmethionine. A compositionally biased stretch (low complexity) spans 1 to 17 (MESETLTAKATITTTTL). The disordered stretch occupies residues 1–28 (MESETLTAKATITTTTLPSHDETKTEST). Over residues 19 to 28 (SHDETKTEST) the composition is skewed to basic and acidic residues. 93–98 (KTGTTW) lines the 3'-phosphoadenylyl sulfate pocket. His-155 functions as the Proton acceptor in the catalytic mechanism. 3'-phosphoadenylyl sulfate-binding positions include Arg-177, Ser-185, Tyr-243, and 313-315 (RKG).

Belongs to the sulfotransferase 1 family. In terms of tissue distribution, expressed in roots, leaves and stems. Barely detected in siliques and flowers.

The protein localises to the cytoplasm. The enzyme catalyses an aliphatic (Z)-desulfo-glucosinolate + 3'-phosphoadenylyl sulfate = a (Z)-omega-(methylsulfanyl)-N-sulfo-alkylhydroximate S-glucoside + adenosine 3',5'-bisphosphate + H(+). With respect to regulation, inhibited by phosphoadenosine 5'-phosphate (PAP). Sulfotransferase that utilizes 3'-phospho-5'-adenylyl sulfate (PAPS) as sulfonate donor to catalyze the sulfate conjugation of desulfo-glucosinolates (dsGSs), the final step in the biosynthesis of the glucosinolate core structure. Preferred substrate are the long-chain desulfo-glucosinolates, 7-methylthioheptyl and 8-methylthiooctyl, derived from methionine. Substrate preference is desulfo-benzyl glucosinolate &gt; desulfo-4-methylthiobutyl glucosinolate &gt; desulfo-6-methylthiohexyl glucosinolate &gt; desulfo-3-methylthiopropyl glucosinolate &gt; desulfo-indol-3-yl methyl glucosinolate &gt; desulfo-singrin &gt; desulfo-3-butenyl glucosinolate. The protein is Cytosolic sulfotransferase 18 (SOT18) of Arabidopsis thaliana (Mouse-ear cress).